Consider the following 376-residue polypeptide: MTSDVLQLTCDLIARASVTPADAGCQALIADRLSAAGFACEHLRLGAVDNLWATHGSGAPVLVLLGHTDVVPPGPASDWASDPFAPQVRDGVLYGRGAADMKGSVAAFVVAAEQFVAAHPEHPGTLAVLLTSDEEGDAIDGVRHVARLFAERGQQIDWCITGEPSSTERLGDLLRVGRRGSLSGNLIVKGVQGHVAYPHKARNPIHLAAPALAELIARQWDDGFESFPPTSLQISNIHAGTGANNVIPGELQVAFNLRYTPHWNAETLEREIVALLERHALTYTLAWHRSGEPFYTPEGTLRRVAREVLGAFVGAPPEESTGGGTSDARFIAPLGAQCIEVGPVNASIHQVDEHVRVADLEALPALYRTLVERLLV.

Residue His67 participates in Zn(2+) binding. Residue Asp69 is part of the active site. Asp100 contacts Zn(2+). Glu134 (proton acceptor) is an active-site residue. Residues Glu135, Glu163, and His349 each contribute to the Zn(2+) site.

Belongs to the peptidase M20A family. DapE subfamily. Homodimer. It depends on Zn(2+) as a cofactor. The cofactor is Co(2+).

It catalyses the reaction N-succinyl-(2S,6S)-2,6-diaminopimelate + H2O = (2S,6S)-2,6-diaminopimelate + succinate. The protein operates within amino-acid biosynthesis; L-lysine biosynthesis via DAP pathway; LL-2,6-diaminopimelate from (S)-tetrahydrodipicolinate (succinylase route): step 3/3. Functionally, catalyzes the hydrolysis of N-succinyl-L,L-diaminopimelic acid (SDAP), forming succinate and LL-2,6-diaminopimelate (DAP), an intermediate involved in the bacterial biosynthesis of lysine and meso-diaminopimelic acid, an essential component of bacterial cell walls. This Xanthomonas campestris pv. campestris (strain 8004) protein is Succinyl-diaminopimelate desuccinylase.